The sequence spans 758 residues: Spastin (758 aa).

Residues 1-99 (MVRTKNQSSS…PTTCSPRSGH (99 aa)) are disordered. The Cytoplasmic segment spans residues 1-121 (MVRTKNQSSS…KQNLYVVSFP (121 aa)). Residues 1–210 (MVRTKNQSSS…RPIQPLEMAA (210 aa)) are required for localization to punctate cytoplasmic foci. 4 stretches are compositionally biased toward low complexity: residues 8–29 (SSSS…SATG), 43–58 (RSSS…AGGS), 66–76 (SSNRRSPGSSP), and 85–95 (TDDLTPTTCSP). An intramembrane region (helical) is located at residues 122–142 (IIFLFNVLRSLIYQLFCIFRY). Topologically, residues 143–758 (LYGASTKVIY…WSQDYGDITI (616 aa)) are cytoplasmic. 2 stretches are compositionally biased toward polar residues: residues 169 to 180 (SKEQQQSLNHPS) and 189 to 198 (QEQQLSNQPQ). Residues 169 to 221 (SKEQQQSLNHPSELNRDSDGQEQQLSNQPQRFRPIQPLEMAANRPGGGYSPGP) are disordered. Residues 208–758 (MAANRPGGGY…WSQDYGDITI (551 aa)) are sufficient for interaction with microtubules and microtubule severing. Positions 233 to 308 (HRRAFEYISK…SMARDRLHFL (76 aa)) constitute an MIT domain. Disordered stretches follow at residues 353–376 (RVRS…GRKL) and 390–454 (NKSQ…ASTP). Polar residues-rich tracts occupy residues 390–406 (NKSQ…TSVG) and 425–454 (QFSS…ASTP). A required for interaction with microtubules region spans residues 443-455 (NNGPSGSGASTPV). 523–530 (GPPGNGKT) contributes to the ATP binding site.

This sequence belongs to the AAA ATPase family. Spastin subfamily. In terms of assembly, homohexamer. The homohexamer is stabilized by ATP-binding. The homohexamer may adopt a ring conformation through which microtubules pass prior to being severed. Interacts with microtubules. Interacts with atl; may be involved in microtubule dynamics.

It is found in the membrane. Its subcellular location is the cytoplasm. It localises to the cytoskeleton. The protein localises to the microtubule organizing center. The protein resides in the centrosome. It is found in the chromosome. Its subcellular location is the lipid droplet. The enzyme catalyses n ATP + n H2O + a microtubule = n ADP + n phosphate + (n+1) alpha/beta tubulin heterodimers.. Functionally, ATP-dependent microtubule severing protein. Stimulates microtubule minus-end depolymerization and poleward microtubule flux in the mitotic spindle. Regulates microtubule stability in the neuromuscular junction synapse. Involved in lipid metabolism by regulating the size and distribution of lipid droplets. Involved in axon regeneration by regulating microtubule severing. The polypeptide is Spastin (Drosophila yakuba (Fruit fly)).